A 198-amino-acid chain; its full sequence is FMN-dependent NADH:quinone oxidoreductase (198 aa).

Residues Ser-9 and 95–98 contribute to the FMN site; that span reads MYNF.

It belongs to the azoreductase type 1 family. In terms of assembly, homodimer. Requires FMN as cofactor.

The catalysed reaction is 2 a quinone + NADH + H(+) = 2 a 1,4-benzosemiquinone + NAD(+). It carries out the reaction N,N-dimethyl-1,4-phenylenediamine + anthranilate + 2 NAD(+) = 2-(4-dimethylaminophenyl)diazenylbenzoate + 2 NADH + 2 H(+). Quinone reductase that provides resistance to thiol-specific stress caused by electrophilic quinones. Functionally, also exhibits azoreductase activity. Catalyzes the reductive cleavage of the azo bond in aromatic azo compounds to the corresponding amines. In Alcanivorax borkumensis (strain ATCC 700651 / DSM 11573 / NCIMB 13689 / SK2), this protein is FMN-dependent NADH:quinone oxidoreductase.